We begin with the raw amino-acid sequence, 865 residues long: Alanine--tRNA ligase (865 aa).

Positions 552, 556, 654, and 658 each coordinate Zn(2+).

It belongs to the class-II aminoacyl-tRNA synthetase family. It depends on Zn(2+) as a cofactor.

It localises to the cytoplasm. It catalyses the reaction tRNA(Ala) + L-alanine + ATP = L-alanyl-tRNA(Ala) + AMP + diphosphate. Its function is as follows. Catalyzes the attachment of alanine to tRNA(Ala) in a two-step reaction: alanine is first activated by ATP to form Ala-AMP and then transferred to the acceptor end of tRNA(Ala). Also edits incorrectly charged Ser-tRNA(Ala) and Gly-tRNA(Ala) via its editing domain. This Coxiella burnetii (strain Dugway 5J108-111) protein is Alanine--tRNA ligase.